Here is a 226-residue protein sequence, read N- to C-terminus: uncharacterized protein (226 aa).

Residues 5-25 (IKTVSFAAAAILVVIICTFLI) form a helical membrane-spanning segment.

It localises to the cell membrane. This is an uncharacterized protein from Bacillus subtilis (strain 168).